Consider the following 215-residue polypeptide: 3-dehydroquinate dehydratase (215 aa).

3-dehydroquinate-binding positions include Ser6, 31–33, and Arg64; that span reads ELR. His111 functions as the Proton donor/acceptor in the catalytic mechanism. Lys138 acts as the Schiff-base intermediate with substrate in catalysis. Residues Arg174, Thr193, and Gln197 each coordinate 3-dehydroquinate.

Belongs to the type-I 3-dehydroquinase family. In terms of assembly, homodimer.

The catalysed reaction is 3-dehydroquinate = 3-dehydroshikimate + H2O. It participates in metabolic intermediate biosynthesis; chorismate biosynthesis; chorismate from D-erythrose 4-phosphate and phosphoenolpyruvate: step 3/7. Involved in the third step of the chorismate pathway, which leads to the biosynthesis of aromatic amino acids. Catalyzes the cis-dehydration of 3-dehydroquinate (DHQ) and introduces the first double bond of the aromatic ring to yield 3-dehydroshikimate. The polypeptide is 3-dehydroquinate dehydratase (Ignicoccus hospitalis (strain KIN4/I / DSM 18386 / JCM 14125)).